A 49-amino-acid polypeptide reads, in one-letter code: Large ribosomal subunit protein bL33 (49 aa).

This sequence belongs to the bacterial ribosomal protein bL33 family.

The sequence is that of Large ribosomal subunit protein bL33 from Carboxydothermus hydrogenoformans (strain ATCC BAA-161 / DSM 6008 / Z-2901).